Here is a 370-residue protein sequence, read N- to C-terminus: Mitochondrial carrier protein SCaMC-3L (370 aa).

3 Solcar repeats span residues 90 to 176 (EALW…CKNY), 184 to 269 (PPFQ…LQCF), and 280 to 367 (PSGL…MKKT). 6 helical membrane-spanning segments follow: residues 96–113 (LLSG…TAPL), 151–170 (GNGI…FSVF), 194–207 (SLAV…INPM), 245–263 (YLPN…LAVY), 282–306 (GLVS…LTLV), and 342–361 (GMTP…YVVY).

This sequence belongs to the mitochondrial carrier (TC 2.A.29) family.

It localises to the mitochondrion inner membrane. It catalyses the reaction Mg(2+)(out) + phosphate(in) + ATP(out) = Mg(2+)(in) + phosphate(out) + ATP(in). It carries out the reaction ADP(out) + phosphate(in) + H(+)(out) = ADP(in) + phosphate(out) + H(+)(in). In terms of biological role, calcium-independent ATP-Mg/Pi exchanger that catalyzes the electroneutral exchange of Mg-ATP or free ADP against an hydrogenphosphate and participates in the net transport of adenine nucleotides across the mitochondria inner membrane. In Homo sapiens (Human), this protein is Mitochondrial carrier protein SCaMC-3L.